A 927-amino-acid chain; its full sequence is Nonsense-mediated mRNA decay factor SMG8 (927 aa).

3 disordered regions span residues 543 to 581, 611 to 636, and 643 to 662; these read NTGK…NTAS, QARS…DTEN, and QEPA…AVST. Acidic residues predominate over residues 551 to 566; the sequence is QDEDAGEDEAEEEEGQ. Over residues 613–633 the composition is skewed to polar residues; the sequence is RSEQLSNSEQNTTRSGSSSVD. Positions 644–654 are enriched in basic and acidic residues; that stretch reads EPAKKEAREDV.

The protein belongs to the SMG8 family.

Its function is as follows. Involved in nonsense-mediated decay (NMD) of mRNAs containing premature stop codons. Probable component of kinase complex containing nonC and recruited to stalled ribosomes. This chain is Nonsense-mediated mRNA decay factor SMG8, found in Drosophila sechellia (Fruit fly).